The following is a 161-amino-acid chain: RNA pyrophosphohydrolase (161 aa).

In terms of domain architecture, Nudix hydrolase spans 6–149 (GYRPNVGIIL…KKDVYRRALK (144 aa)). Positions 38–59 (GGIKSDETPEEALFRELKEEVG) match the Nudix box motif.

Belongs to the Nudix hydrolase family. RppH subfamily. Requires a divalent metal cation as cofactor.

Accelerates the degradation of transcripts by removing pyrophosphate from the 5'-end of triphosphorylated RNA, leading to a more labile monophosphorylated state that can stimulate subsequent ribonuclease cleavage. In Marinomonas sp. (strain MWYL1), this protein is RNA pyrophosphohydrolase.